Here is a 310-residue protein sequence, read N- to C-terminus: MIIVTGGAGFIGSNIVKALNDKGITDILVVDNLKDGTKFVNLVDLDIADYMDKEDFLIQIMAGEEFGDVEAIFHEGACSSTTEWDGKYMMDNNYQYSKELLHYCLEREIPFLYASSAATYGGRTSDFIESREYEKPLNVYGYSKFLFDEYVRQILPEANSQIVGFRYFNVYGPREGHKGSMASVAFHLNTQLNKGESPKLFEGSENFKRDFVYVGDVADVNLWFLENGVSGIFNLGTGRAESFQAVADATLAYHKKGQIEYIPFPDKLKGRYQAFTQADLTNLRAAGYDKPFKTVAEGVMEYMAWLNRDA.

Residues 10–11 (FI), 31–32 (DN), lysine 38, lysine 53, 75–79 (EGACS), and asparagine 92 contribute to the NADP(+) site. Tyrosine 140 (proton acceptor) is an active-site residue. An NADP(+)-binding site is contributed by lysine 144. Residue asparagine 169 coordinates substrate. NADP(+) contacts are provided by valine 170 and lysine 178. Lysine 178 functions as the Proton acceptor in the catalytic mechanism. Substrate contacts are provided by residues serine 180, histidine 187, 201–204 (FEGS), and arginine 209. Position 267 is an N6-acetyllysine (lysine 267). Residue tyrosine 272 coordinates substrate.

Belongs to the NAD(P)-dependent epimerase/dehydratase family. HldD subfamily. In terms of assembly, homopentamer. NADP(+) is required as a cofactor.

The enzyme catalyses ADP-D-glycero-beta-D-manno-heptose = ADP-L-glycero-beta-D-manno-heptose. It participates in nucleotide-sugar biosynthesis; ADP-L-glycero-beta-D-manno-heptose biosynthesis; ADP-L-glycero-beta-D-manno-heptose from D-glycero-beta-D-manno-heptose 7-phosphate: step 4/4. Catalyzes the interconversion between ADP-D-glycero-beta-D-manno-heptose and ADP-L-glycero-beta-D-manno-heptose via an epimerization at carbon 6 of the heptose. The protein is ADP-L-glycero-D-manno-heptose-6-epimerase of Escherichia coli (strain ATCC 8739 / DSM 1576 / NBRC 3972 / NCIMB 8545 / WDCM 00012 / Crooks).